The sequence spans 754 residues: Disintegrin and metalloproteinase domain-containing protein 7 (754 aa).

A signal peptide spans 1–18 (MLPGCIFLMILLIPQVKE). A propeptide spanning residues 19 to 176 (KFILGVEGQQ…NYSCTELNFT (158 aa)) is cleaved from the precursor. Residues 19 to 668 (KFILGVEGQQ…ACEETLHVTN (650 aa)) are Extracellular-facing. N-linked (GlcNAc...) asparagine glycosylation is found at Asn84, Asn167, Asn174, and Asn184. The Peptidase M12B domain occupies 199 to 394 (KYVELFIVAD…YKPTCMLNIP (196 aa)). 4 disulfide bridges follow: Cys310–Cys389, Cys350–Cys373, Cys352–Cys357, and Cys460–Cys480. The region spanning 402-488 (FQFCGNKKLD…ACPKDQFRVN (87 aa)) is the Disintegrin domain. N-linked (GlcNAc...) asparagine glycans are attached at residues Asn584 and Asn668. A helical transmembrane segment spans residues 669 to 689 (ITILVVVLVLVIVGIGVLILL). Over 690-754 (VRYRKCIKLK…GIADPNQSAK (65 aa)) the chain is Cytoplasmic.

As to quaternary structure, interacts with ITM2B in sperm; the interaction increases following capacitation. Interacts with HSPA5 and CANX.

The protein localises to the membrane. Its function is as follows. Required for normal male fertility via maintenance of epithelial cell morphology in the caput epididymis and subsequently correct epididymis lumen structure required for sperm development. Plays a role in sperm motility, flagella morphology and tyrosine phosphorylation during sperm capacitance. Plays a role in normal expression levels of HSPA5, ITM2B and ADAM2 in sperm both prior to and post-capacitation. This is a non catalytic metalloprotease-like protein. The sequence is that of Disintegrin and metalloproteinase domain-containing protein 7 from Homo sapiens (Human).